A 292-amino-acid polypeptide reads, in one-letter code: Homoserine kinase (292 aa).

81 to 91 is an ATP binding site; that stretch reads RPKSGLGSSGA.

This sequence belongs to the GHMP kinase family. Homoserine kinase subfamily.

The protein localises to the cytoplasm. The catalysed reaction is L-homoserine + ATP = O-phospho-L-homoserine + ADP + H(+). It functions in the pathway amino-acid biosynthesis; L-threonine biosynthesis; L-threonine from L-aspartate: step 4/5. In terms of biological role, catalyzes the ATP-dependent phosphorylation of L-homoserine to L-homoserine phosphate. The polypeptide is Homoserine kinase (Pyrococcus furiosus (strain ATCC 43587 / DSM 3638 / JCM 8422 / Vc1)).